A 245-amino-acid chain; its full sequence is 1-(5-phosphoribosyl)-5-[(5-phosphoribosylamino)methylideneamino] imidazole-4-carboxamide isomerase (245 aa).

The Proton acceptor role is filled by aspartate 7. Catalysis depends on aspartate 129, which acts as the Proton donor.

The protein belongs to the HisA/HisF family.

Its subcellular location is the cytoplasm. The catalysed reaction is 1-(5-phospho-beta-D-ribosyl)-5-[(5-phospho-beta-D-ribosylamino)methylideneamino]imidazole-4-carboxamide = 5-[(5-phospho-1-deoxy-D-ribulos-1-ylimino)methylamino]-1-(5-phospho-beta-D-ribosyl)imidazole-4-carboxamide. It functions in the pathway amino-acid biosynthesis; L-histidine biosynthesis; L-histidine from 5-phospho-alpha-D-ribose 1-diphosphate: step 4/9. In Tolumonas auensis (strain DSM 9187 / NBRC 110442 / TA 4), this protein is 1-(5-phosphoribosyl)-5-[(5-phosphoribosylamino)methylideneamino] imidazole-4-carboxamide isomerase.